Consider the following 489-residue polypeptide: UBX domain-containing protein 7 (489 aa).

Ala2 carries the post-translational modification N-acetylalanine. The 53-residue stretch at 2 to 54 (AAHGGSAASSALKGLIQQFTTITGASESVGKHMLEACNNNLEMAVTMFLDGGG) folds into the UBA domain. The segment at 56 to 77 (AEEPSTSSASVSTVRPHTEEEV) is disordered. Residues 59–70 (PSTSSASVSTVR) are compositionally biased toward polar residues. A Glycyl lysine isopeptide (Lys-Gly) (interchain with G-Cter in SUMO2) cross-link involves residue Lys84. A Glycyl lysine isopeptide (Lys-Gly) (interchain with G-Cter in ubiquitin) cross-link involves residue Lys99. Lys134 participates in a covalent cross-link: Glycyl lysine isopeptide (Lys-Gly) (interchain with G-Cter in SUMO2). Phosphoserine is present on residues Ser278, Ser280, Ser285, and Ser288. The region spanning 285–304 (SEDSQLEAAIRASLQETHFD) is the UIM domain. A compositionally biased stretch (polar residues) spans 300–309 (ETHFDSTQTK). Positions 300–384 (ETHFDSTQTK…PGTATNHQGL (85 aa)) are disordered. Phosphothreonine is present on Thr306. Basic and acidic residues predominate over residues 352-366 (HKDLGHRKEENRRPL). The UBX domain occupies 408–485 (VNGPKAQLML…GLCPQETVFV (78 aa)).

Interacts with neddylated CUL2, ubiquitinated HIF1A, and VCP/p97.

It localises to the nucleus. In terms of biological role, ubiquitin-binding adapter that links a subset of NEDD8-associated cullin ring ligases (CRLs) to the segregase VCP/p97, to regulate turnover of their ubiquitination substrates. This Homo sapiens (Human) protein is UBX domain-containing protein 7 (UBXN7).